The primary structure comprises 101 residues: Small ribosomal subunit protein uS14 (101 aa).

It belongs to the universal ribosomal protein uS14 family. As to quaternary structure, part of the 30S ribosomal subunit. Contacts proteins S3 and S10.

Binds 16S rRNA, required for the assembly of 30S particles and may also be responsible for determining the conformation of the 16S rRNA at the A site. This chain is Small ribosomal subunit protein uS14, found in Orientia tsutsugamushi (strain Boryong) (Rickettsia tsutsugamushi).